Consider the following 244-residue polypeptide: Ribosomal RNA large subunit methyltransferase E (244 aa).

Residues Gly81, Trp83, Asp109, Asp125, and Asp149 each contribute to the S-adenosyl-L-methionine site. Lys189 acts as the Proton acceptor in catalysis.

The protein belongs to the class I-like SAM-binding methyltransferase superfamily. RNA methyltransferase RlmE family.

It localises to the cytoplasm. It catalyses the reaction uridine(2552) in 23S rRNA + S-adenosyl-L-methionine = 2'-O-methyluridine(2552) in 23S rRNA + S-adenosyl-L-homocysteine + H(+). Functionally, specifically methylates the uridine in position 2552 of 23S rRNA at the 2'-O position of the ribose in the fully assembled 50S ribosomal subunit. The protein is Ribosomal RNA large subunit methyltransferase E of Cereibacter sphaeroides (strain ATCC 17023 / DSM 158 / JCM 6121 / CCUG 31486 / LMG 2827 / NBRC 12203 / NCIMB 8253 / ATH 2.4.1.) (Rhodobacter sphaeroides).